Here is a 198-residue protein sequence, read N- to C-terminus: tRNA (pseudouridine(54)-N(1))-methyltransferase (198 aa).

S-adenosyl-L-methionine-binding positions include Leu130, Gly153, 176–181 (LSPLEL), and Cys186.

It belongs to the methyltransferase superfamily. TrmY family. In terms of assembly, homodimer.

The protein resides in the cytoplasm. It catalyses the reaction pseudouridine(54) in tRNA + S-adenosyl-L-methionine = N(1)-methylpseudouridine(54) in tRNA + S-adenosyl-L-homocysteine + H(+). Functionally, specifically catalyzes the N1-methylation of pseudouridine at position 54 (Psi54) in tRNAs. This Methanococcus maripaludis (strain C7 / ATCC BAA-1331) protein is tRNA (pseudouridine(54)-N(1))-methyltransferase.